The sequence spans 445 residues: Probable glycine dehydrogenase (decarboxylating) subunit 1 (445 aa).

Belongs to the GcvP family. N-terminal subunit subfamily. As to quaternary structure, the glycine cleavage system is composed of four proteins: P, T, L and H. In this organism, the P 'protein' is a heterodimer of two subunits.

The enzyme catalyses N(6)-[(R)-lipoyl]-L-lysyl-[glycine-cleavage complex H protein] + glycine + H(+) = N(6)-[(R)-S(8)-aminomethyldihydrolipoyl]-L-lysyl-[glycine-cleavage complex H protein] + CO2. Its function is as follows. The glycine cleavage system catalyzes the degradation of glycine. The P protein binds the alpha-amino group of glycine through its pyridoxal phosphate cofactor; CO(2) is released and the remaining methylamine moiety is then transferred to the lipoamide cofactor of the H protein. The sequence is that of Probable glycine dehydrogenase (decarboxylating) subunit 1 from Anaeromyxobacter sp. (strain Fw109-5).